We begin with the raw amino-acid sequence, 82 residues long: Small ribosomal subunit protein bS16 (82 aa).

Belongs to the bacterial ribosomal protein bS16 family.

This Mannheimia succiniciproducens (strain KCTC 0769BP / MBEL55E) protein is Small ribosomal subunit protein bS16.